Here is a 535-residue protein sequence, read N- to C-terminus: MFNIILAMVCALIGLIIGYVAISMKMKSSKEAAELTLLNAEQDAVDLRGKAEIEAEHIRKAAERESKAHQKELLLEAKEEARKYREEIEKEFKSDRQELKQMEARLTDRASSLDRKDENLSNKEKMLDSKEQSLTDKSRHINEREQEIATLETKKVEELSRIAELSQEEAKDIILADTEKDLAHDIATRIKEAEREVKDRSNKIAKDLLAQAMQRLAGEYVTEQTITTVHLPDDNMKGRIIGREGRNIRTLESLTGIDVIIDDTPEVVVLSGFDPIRREIARMTLESLIQDGRIHPARIEELVEKNRLEMDQRIREYGEAAAYEIGAPNLHPDLIKIMGRLQFRTSYGQNVLRHSVEVGKLAGILAGELGENVDLARRAGFLHDMGKAIDREVEGSHVEIGMEFARKYKEHPIVVNTIASHHGDVEPDSVIAVIVAAADALSSARPGARNESMENYIKRLRDLEEIANGFEGVQNAFALQAGREIRIMVQPGKVSDDQVVIMSHKVREKIEQNLDYPGNIKVTVIREMRAVDFAK.

Residues 4 to 24 (IILAMVCALIGLIIGYVAISM) traverse the membrane as a helical segment. The interval 107–145 (TDRASSLDRKDENLSNKEKMLDSKEQSLTDKSRHINERE) is disordered. In terms of domain architecture, KH spans 225 to 285 (TITTVHLPDD…IRREIARMTL (61 aa)). One can recognise an HD domain in the interval 351–444 (VLRHSVEVGK…VAAADALSSA (94 aa)).

Belongs to the RNase Y family.

It localises to the cell membrane. In terms of biological role, endoribonuclease that initiates mRNA decay. The sequence is that of Ribonuclease Y from Streptococcus agalactiae serotype Ia (strain ATCC 27591 / A909 / CDC SS700).